The sequence spans 341 residues: Retinol dehydrogenase 10-A (341 aa).

A helical; Signal-anchor membrane pass occupies residues 3 to 23 (IVLEFFLVTFRVLWAFVLAAG). An NADP(+)-binding site is contributed by 40–64 (LITGAGSGLGRLFALEFARRRAQLV). Substrate is bound at residue Ser197. Tyr210 serves as the catalytic Proton acceptor.

Belongs to the short-chain dehydrogenases/reductases (SDR) family.

Its subcellular location is the microsome membrane. The protein resides in the endoplasmic reticulum membrane. It catalyses the reaction all-trans-retinol + NADP(+) = all-trans-retinal + NADPH + H(+). The protein operates within cofactor metabolism; retinol metabolism. Functionally, retinol dehydrogenase with a clear preference for NADP. Converts all-trans-retinol to all-trans-retinal. Has no detectable activity towards 11-cis-retinol, 9-cis-retinol and 13-cis-retinol. The sequence is that of Retinol dehydrogenase 10-A (rdh10-a) from Xenopus laevis (African clawed frog).